The following is a 361-amino-acid chain: uncharacterized protein (361 aa).

The first 17 residues, 1–17 (MNLFIYVLLLSIWTSSC), serve as a signal peptide directing secretion. Residues 18 to 47 (LDRNESNGSATAVTTHAEFKQTKLQELRRR) are Extracellular-facing. N-linked (GlcNAc...) asparagine glycosylation is present at N24. A helical transmembrane segment spans residues 48-68 (LLIIVIGTLITGYMVSCTCLL). The Cytoplasmic segment spans residues 69-361 (HYSCDSEEAH…EDIYKNSRNN (293 aa)). Positions 95–106 (SSKISFTDSKSP) are enriched in polar residues. Positions 95–197 (SSKISFTDSK…SQVSPSYPEK (103 aa)) are disordered. Low complexity predominate over residues 144–158 (PSSQKKPSKPSAPKK). A compositionally biased stretch (basic residues) spans 169-185 (HRTRSPKKAHRQAHAHK).

The protein localises to the membrane. This is an uncharacterized protein from Bos taurus (Bovine).